The sequence spans 249 residues: uncharacterized protein (249 aa).

The N-terminal stretch at 1–25 (MRYLNTKNIIAAGVLLSCMSSIAWG) is a signal peptide.

The protein belongs to the periplasmic pilus chaperone family.

Its subcellular location is the periplasm. Functionally, could be required for the biogenesis of a putative fimbria. This is an uncharacterized protein from Escherichia coli (strain K12).